Here is a 407-residue protein sequence, read N- to C-terminus: MAREKFERSKPHVNIGTIGHVDHGKTTLTAAISATLAVYSGSKKDISLIDSAPEEKARGITINTAHVEYETETRHYAHVDCPGHADYVKNMITGAAQMDGGILVVSAADGPMPQTREHILLAKQVGVPHLVVFLNKADQVDDEELLELVELEVQELLENYDFPGDDIPFVSGSALLALQAVEGGPKAKGDDKWVDRIFDLMESVDNYIPAPERDTEKTFLMAVEDVFSITGRGTVATGRIERGILKIGDTIEIVGLKDTQTTTVTGIEMFQKTLDEGMAGDNVGILIRGVQKTDIERGMVLAQPGTISPHKKFEAEVYVLGKDEGGRHTPFFTGYRPQFYVRTIDVTGTIVQFTGDDGSAAEMVMPGDRIKMTAELINPIAIEQGMRFAIREGGRTVGAGVVSKILE.

One can recognise a tr-type G domain in the interval 10–212 (KPHVNIGTIG…SVDNYIPAPE (203 aa)). The interval 19 to 26 (GHVDHGKT) is G1. Position 19-26 (19-26 (GHVDHGKT)) interacts with GTP. Threonine 26 contributes to the Mg(2+) binding site. The tract at residues 59-63 (GITIN) is G2. The interval 80 to 83 (DCPG) is G3. GTP-binding positions include 80-84 (DCPGH) and 135-138 (NKAD). The tract at residues 135-138 (NKAD) is G4. The G5 stretch occupies residues 173-175 (SAL).

Belongs to the TRAFAC class translation factor GTPase superfamily. Classic translation factor GTPase family. EF-Tu/EF-1A subfamily.

It localises to the plastid. It is found in the chloroplast. It catalyses the reaction GTP + H2O = GDP + phosphate + H(+). Functionally, GTP hydrolase that promotes the GTP-dependent binding of aminoacyl-tRNA to the A-site of ribosomes during protein biosynthesis. This is Elongation factor Tu, chloroplastic (tufA) from Emiliania huxleyi (Coccolithophore).